Reading from the N-terminus, the 159-residue chain is Cytochrome c-type biogenesis protein CcmE (159 aa).

Over 1–8 the chain is Cytoplasmic; that stretch reads MNIRRKNR. A helical; Signal-anchor for type II membrane protein membrane pass occupies residues 9–29; the sequence is LWIACAVLAGLALTIGLVLYA. The Periplasmic portion of the chain corresponds to 30–159; that stretch reads LRSNIDLFYT…PASVYKDPAS (130 aa). Positions 130 and 134 each coordinate heme. The segment covering 134–147 has biased composition (basic and acidic residues); that stretch reads YTPPEVEKAMEANH. Positions 134–159 are disordered; that stretch reads YTPPEVEKAMEANHRRPASVYKDPAS.

It belongs to the CcmE/CycJ family.

Its subcellular location is the cell inner membrane. In terms of biological role, heme chaperone required for the biogenesis of c-type cytochromes. Transiently binds heme delivered by CcmC and transfers the heme to apo-cytochromes in a process facilitated by CcmF and CcmH. The polypeptide is Cytochrome c-type biogenesis protein CcmE (Escherichia coli (strain SMS-3-5 / SECEC)).